We begin with the raw amino-acid sequence, 499 residues long: Lysine--tRNA ligase (499 aa).

The Mg(2+) site is built by Glu-408 and Glu-415.

The protein belongs to the class-II aminoacyl-tRNA synthetase family. In terms of assembly, homodimer. The cofactor is Mg(2+).

It is found in the cytoplasm. It carries out the reaction tRNA(Lys) + L-lysine + ATP = L-lysyl-tRNA(Lys) + AMP + diphosphate. This is Lysine--tRNA ligase from Bacillus mycoides (strain KBAB4) (Bacillus weihenstephanensis).